The following is a 297-amino-acid chain: Nitrogenase iron protein (297 aa).

ATP is bound at residue 11–18 (GKGGIGKS). C99 contributes to the [4Fe-4S] cluster binding site. Residue R102 is modified to ADP-ribosylarginine; by dinitrogenase reductase ADP-ribosyltransferase. Residue C133 coordinates [4Fe-4S] cluster.

This sequence belongs to the NifH/BchL/ChlL family. As to quaternary structure, homodimer. Requires [4Fe-4S] cluster as cofactor. Post-translationally, the reversible ADP-ribosylation of Arg-102 inactivates the nitrogenase reductase and regulates nitrogenase activity.

It carries out the reaction N2 + 8 reduced [2Fe-2S]-[ferredoxin] + 16 ATP + 16 H2O = H2 + 8 oxidized [2Fe-2S]-[ferredoxin] + 2 NH4(+) + 16 ADP + 16 phosphate + 6 H(+). Its function is as follows. The key enzymatic reactions in nitrogen fixation are catalyzed by the nitrogenase complex, which has 2 components: the iron protein and the molybdenum-iron protein. In Mesorhizobium japonicum (strain LMG 29417 / CECT 9101 / MAFF 303099) (Mesorhizobium loti (strain MAFF 303099)), this protein is Nitrogenase iron protein.